A 775-amino-acid chain; its full sequence is 5-methyltetrahydropteroyltriglutamate--homocysteine methyltransferase (775 aa).

5-methyltetrahydropteroyltri-L-glutamate-binding positions include 16–19 (REMK) and lysine 115. Residues 435–437 (IGS) and glutamate 488 contribute to the L-homocysteine site. Residues 435–437 (IGS) and glutamate 488 contribute to the L-methionine site. 5-methyltetrahydropteroyltri-L-glutamate contacts are provided by residues 519–520 (RC) and tryptophan 565. Aspartate 603 lines the L-homocysteine pocket. Residue aspartate 603 coordinates L-methionine. Residue glutamate 609 coordinates 5-methyltetrahydropteroyltri-L-glutamate. The Zn(2+) site is built by histidine 645, cysteine 647, and glutamate 669. Residue histidine 698 is the Proton donor of the active site. Cysteine 730 contacts Zn(2+).

This sequence belongs to the vitamin-B12 independent methionine synthase family. The cofactor is Zn(2+).

The enzyme catalyses 5-methyltetrahydropteroyltri-L-glutamate + L-homocysteine = tetrahydropteroyltri-L-glutamate + L-methionine. It functions in the pathway amino-acid biosynthesis; L-methionine biosynthesis via de novo pathway; L-methionine from L-homocysteine (MetE route): step 1/1. Catalyzes the transfer of a methyl group from 5-methyltetrahydrofolate to homocysteine resulting in methionine formation. This is 5-methyltetrahydropteroyltriglutamate--homocysteine methyltransferase from Coxiella burnetii (strain CbuG_Q212) (Coxiella burnetii (strain Q212)).